Here is a 351-residue protein sequence, read N- to C-terminus: uncharacterized protein (351 aa).

5 residues coordinate Mn(2+): Asp-215, Asp-226, His-290, Glu-319, and Glu-333.

This sequence belongs to the peptidase M24B family. The cofactor is Mn(2+).

This is an uncharacterized protein from Staphylococcus aureus (strain MW2).